Consider the following 501-residue polypeptide: DNA nucleotidylexotransferase (501 aa).

Positions 11–17 (KKRKRPV) match the Nuclear localization signal motif. Residues 24–121 (QVEVKFKEVT…RPVRVETRHS (98 aa)) enclose the BRCT domain. Positions 249 to 253 (VGPKT) are involved in DNA binding. A 2'-deoxyribonucleoside 5'-triphosphate-binding positions include 324–329 (GFRRGK) and 333–336 (HDVD). Mg(2+) contacts are provided by aspartate 334, aspartate 336, and aspartate 426. A 2'-deoxyribonucleoside 5'-triphosphate is bound at residue 441–442 (GW).

It belongs to the DNA polymerase type-X family. Mg(2+) serves as cofactor.

The protein localises to the nucleus. The catalysed reaction is DNA(n) + a 2'-deoxyribonucleoside 5'-triphosphate = DNA(n+1) + diphosphate. Its function is as follows. Template-independent DNA polymerase which catalyzes the random addition of deoxynucleoside 5'-triphosphate to the 3'-end of a DNA initiator. One of the in vivo functions of this enzyme is the addition of nucleotides at the junction (N region) of rearranged Ig heavy chain and T-cell receptor gene segments during the maturation of B- and T-cells. In Oncorhynchus mykiss (Rainbow trout), this protein is DNA nucleotidylexotransferase (dntt).